Here is a 201-residue protein sequence, read N- to C-terminus: Small ribosomal subunit protein uS4 (201 aa).

In terms of domain architecture, S4 RNA-binding spans Ser91–Asp151.

Belongs to the universal ribosomal protein uS4 family. As to quaternary structure, part of the 30S ribosomal subunit. Contacts protein S5. The interaction surface between S4 and S5 is involved in control of translational fidelity.

Functionally, one of the primary rRNA binding proteins, it binds directly to 16S rRNA where it nucleates assembly of the body of the 30S subunit. In terms of biological role, with S5 and S12 plays an important role in translational accuracy. The chain is Small ribosomal subunit protein uS4 from Corynebacterium kroppenstedtii (strain DSM 44385 / JCM 11950 / CIP 105744 / CCUG 35717).